Reading from the N-terminus, the 236-residue chain is Leucyl/phenylalanyl-tRNA--protein transferase (236 aa).

Belongs to the L/F-transferase family.

The protein localises to the cytoplasm. The enzyme catalyses N-terminal L-lysyl-[protein] + L-leucyl-tRNA(Leu) = N-terminal L-leucyl-L-lysyl-[protein] + tRNA(Leu) + H(+). It carries out the reaction N-terminal L-arginyl-[protein] + L-leucyl-tRNA(Leu) = N-terminal L-leucyl-L-arginyl-[protein] + tRNA(Leu) + H(+). It catalyses the reaction L-phenylalanyl-tRNA(Phe) + an N-terminal L-alpha-aminoacyl-[protein] = an N-terminal L-phenylalanyl-L-alpha-aminoacyl-[protein] + tRNA(Phe). Its function is as follows. Functions in the N-end rule pathway of protein degradation where it conjugates Leu, Phe and, less efficiently, Met from aminoacyl-tRNAs to the N-termini of proteins containing an N-terminal arginine or lysine. This Vibrio campbellii (strain ATCC BAA-1116) protein is Leucyl/phenylalanyl-tRNA--protein transferase.